The sequence spans 337 residues: Dehydrogenase FUB6 (337 aa).

It belongs to the zinc-containing alcohol dehydrogenase family. Quinone oxidoreductase subfamily.

It functions in the pathway mycotoxin biosynthesis. Functionally, dehydrogenase; part of the gene cluster that mediates the biosynthesis of fusaric acid, a mycotoxin with low to moderate toxicity to animals and humans, but with high phytotoxic properties. L-aspartate is suggested as fusaric acid amino acid precursor that is activated and further processed to O-acetyl-L-homoserine by cluster enzymes aspartate kinase FUB3 and homoserine O-acetyltransferase FUB5, as well as enzymes of the primary metabolism. The polyketide synthase (PKS) FUB1 generates the triketide trans-2-hexenal which is presumptively released by the hydrolase FUB4 and linked to the NRPS-bound amino acid precursor by NAD(P)-dependent dehydrogenase FUB6. FUB1, FUB4, and the non-canonical NRPS Fub8 may form an enzyme complex. Further processing of the NRPS-bound intermediate might be carried out by FUB6 and the O-acetylhomoserine FUB7, enabling a spontaneous electrocyclization to close the carbon backbone of fusaric acid. Dihydrofusaric acid is likely to be released via reduction by the thioester reductase (TR) domain of FUB8 whereupon the final oxidation to fusaric acid may (also) be performed by the FMN-dependent dehydrogenase FUB9. This Gibberella fujikuroi (strain CBS 195.34 / IMI 58289 / NRRL A-6831) (Bakanae and foot rot disease fungus) protein is Dehydrogenase FUB6.